We begin with the raw amino-acid sequence, 502 residues long: Glycerol kinase (502 aa).

Thr14 contributes to the ADP binding site. Positions 14, 15, and 16 each coordinate ATP. Thr14 is a sn-glycerol 3-phosphate binding site. Arg18 serves as a coordination point for ADP. 4 residues coordinate sn-glycerol 3-phosphate: Arg84, Glu85, Tyr136, and Asp246. Residues Arg84, Glu85, Tyr136, Asp246, and Gln247 each contribute to the glycerol site. ADP contacts are provided by Thr268 and Gly311. 4 residues coordinate ATP: Thr268, Gly311, Gln315, and Gly412. 2 residues coordinate ADP: Gly412 and Asn416.

Belongs to the FGGY kinase family. In terms of assembly, homotetramer and homodimer (in equilibrium). Heterodimer with EIIA-Glc. Binds 1 zinc ion per glycerol kinase EIIA-Glc dimer. The zinc ion is important for dimerization.

It catalyses the reaction glycerol + ATP = sn-glycerol 3-phosphate + ADP + H(+). Its pathway is polyol metabolism; glycerol degradation via glycerol kinase pathway; sn-glycerol 3-phosphate from glycerol: step 1/1. With respect to regulation, activity of this regulatory enzyme is affected by several metabolites. Allosterically and non-competitively inhibited by fructose 1,6-bisphosphate (FBP) and unphosphorylated phosphocarrier protein EIIA-Glc (III-Glc), an integral component of the bacterial phosphotransferase (PTS) system. Functionally, key enzyme in the regulation of glycerol uptake and metabolism. Catalyzes the phosphorylation of glycerol to yield sn-glycerol 3-phosphate. The protein is Glycerol kinase of Salmonella agona (strain SL483).